The sequence spans 795 residues: DNA ligase (795 aa).

Residues 48-52 (DAEYD), 97-98 (SL), and glutamate 131 contribute to the NAD(+) site. Lysine 133 serves as the catalytic N6-AMP-lysine intermediate. Residues arginine 154, glutamate 191, lysine 307, and lysine 331 each contribute to the NAD(+) site. Positions 425, 428, 445, and 451 each coordinate Zn(2+). One can recognise a BRCT domain in the interval 716 to 795 (SAKSPISGKI…EEWAEISGNE (80 aa)).

This sequence belongs to the NAD-dependent DNA ligase family. LigA subfamily. Mg(2+) serves as cofactor. Requires Mn(2+) as cofactor.

It carries out the reaction NAD(+) + (deoxyribonucleotide)n-3'-hydroxyl + 5'-phospho-(deoxyribonucleotide)m = (deoxyribonucleotide)n+m + AMP + beta-nicotinamide D-nucleotide.. DNA ligase that catalyzes the formation of phosphodiester linkages between 5'-phosphoryl and 3'-hydroxyl groups in double-stranded DNA using NAD as a coenzyme and as the energy source for the reaction. It is essential for DNA replication and repair of damaged DNA. The sequence is that of DNA ligase from Rhodopseudomonas palustris (strain BisB18).